The primary structure comprises 171 residues: SPbeta prophage-derived uncharacterized protein YokC (171 aa).

The polypeptide is SPbeta prophage-derived uncharacterized protein YokC (yokC) (Bacillus subtilis (strain 168)).